A 61-amino-acid polypeptide reads, in one-letter code: Sec-independent protein translocase protein TatA (61 aa).

Residues 1–21 (MFGLGITEILLILGIIILIFG) traverse the membrane as a helical segment.

It belongs to the TatA/E family. The Tat system comprises two distinct complexes: a TatABC complex, containing multiple copies of TatA, TatB and TatC subunits, and a separate TatA complex, containing only TatA subunits. Substrates initially bind to the TatABC complex, which probably triggers association of the separate TatA complex to form the active translocon.

The protein resides in the cell inner membrane. Functionally, part of the twin-arginine translocation (Tat) system that transports large folded proteins containing a characteristic twin-arginine motif in their signal peptide across membranes. TatA could form the protein-conducting channel of the Tat system. This Maridesulfovibrio salexigens (strain ATCC 14822 / DSM 2638 / NCIMB 8403 / VKM B-1763) (Desulfovibrio salexigens) protein is Sec-independent protein translocase protein TatA.